A 202-amino-acid polypeptide reads, in one-letter code: Large ribosomal subunit protein bL25 (202 aa).

A disordered region spans residues 182-202 (EVEAEETEDDEAASEGEEAAE). Residues 183–202 (VEAEETEDDEAASEGEEAAE) show a composition bias toward acidic residues.

The protein belongs to the bacterial ribosomal protein bL25 family. CTC subfamily. Part of the 50S ribosomal subunit; part of the 5S rRNA/L5/L18/L25 subcomplex. Contacts the 5S rRNA. Binds to the 5S rRNA independently of L5 and L18.

In terms of biological role, this is one of the proteins that binds to the 5S RNA in the ribosome where it forms part of the central protuberance. This Corynebacterium glutamicum (strain R) protein is Large ribosomal subunit protein bL25.